We begin with the raw amino-acid sequence, 408 residues long: Indian hedgehog protein (408 aa).

The N-terminal stretch at 1 to 23 is a signal peptide; that stretch reads MKPARLLLLLSGCALLLAPAVRC. Residue Cys-24 is the site of N-palmitoyl cysteine attachment. Ca(2+) contacts are provided by Glu-90, Glu-91, Asp-96, Thr-126, Glu-127, Asp-130, and Asp-132. Residues His-141, Asp-148, and His-183 each coordinate Zn(2+). Gly-198 carries Cholesterol glycine ester lipidation.

This sequence belongs to the hedgehog family. In terms of assembly, multimer. As to quaternary structure, interacts with BOC and CDON. Interacts with PTCH1. Interacts with glypican GPC3. Cholesterylation is required for N-product targeting to lipid rafts and multimerization. In terms of processing, the C-terminal domain displays an autoproteolysis activity and a cholesterol transferase activity. Both activities result in the cleavage of the full-length protein and covalent attachment of a cholesterol moiety to the C-terminal of the newly generated N-product. The N-product is the active species in both local and long-range signaling, whereas the C-product is degraded in the endoplasmic reticulum. Post-translationally, N-palmitoylation by HHAT of N-product is required for indian hedgehog protein N-product multimerization and full activity. In terms of tissue distribution, expressed in developing midgut, lung and cartilage of developing long bones in the limb.

Its subcellular location is the cell membrane. The protein localises to the endoplasmic reticulum membrane. The protein resides in the golgi apparatus membrane. It localises to the secreted. It carries out the reaction glycyl-L-cysteinyl-[protein] + cholesterol + H(+) = [protein]-C-terminal glycyl cholesterol ester + N-terminal L-cysteinyl-[protein]. Plays a role in embryonic morphogenesis; it is involved in the regulation of endochondral skeleton formation, and the development of retinal pigment epithelium (RPE), photoreceptors and periocular tissues. Its function is as follows. The C-terminal part of the indian hedgehog protein precursor displays an autoproteolysis and a cholesterol transferase activity. Both activities result in the cleavage of the full-length protein into two parts followed by the covalent attachment of a cholesterol moiety to the C-terminal of the newly generated N-product. Both activities occur in the endoplasmic reticulum. Functionally, the dually lipidated indian hedgehog protein N-product is a morphogen which is essential for a variety of patterning events during development. Binds to the patched (PTCH1) receptor, which functions in association with smoothened (SMO), to activate the transcription of target genes. Plays a role in morphogenesis of the skeleton by coordinating growth and differentiation of the endochondral skeleton. Positively regulates PTHLH expression during endochondral bone formation preventing chondrocyte hypertrophy. In contrast, participates in normal chondrocyte proliferation in a PTHLH-independent pathway. The sequence is that of Indian hedgehog protein from Gallus gallus (Chicken).